The primary structure comprises 397 residues: Subtilisin-like protease 3 (397 aa).

The signal sequence occupies residues 1–19 (MGCIKVISVFLAAIAAVDA). Positions 20 to 116 (RAFFHNRGGS…VEHDRVVKLA (97 aa)) are excised as a propeptide. Residues 35-116 (SYIVVMKDGV…VEHDRVVKLA (82 aa)) form the Inhibitor I9 domain. The Peptidase S8 domain occupies 126 to 397 (TWGLGRVSHR…NRLLYNGSGQ (272 aa)). Catalysis depends on charge relay system residues aspartate 158 and histidine 189. Asparagine 250 carries an N-linked (GlcNAc...) asparagine glycan. The active-site Charge relay system is serine 344. Asparagine 393 carries an N-linked (GlcNAc...) asparagine glycan.

The protein belongs to the peptidase S8 family.

The protein resides in the secreted. In terms of biological role, secreted subtilisin-like serine protease with keratinolytic activity that contributes to pathogenicity. The sequence is that of Subtilisin-like protease 3 (SUB3) from Trichophyton equinum (Horse ringworm fungus).